We begin with the raw amino-acid sequence, 478 residues long: Probable serine carboxypeptidase CPVL (478 aa).

A signal peptide spans 1-22; the sequence is MVRAKWKMVVSLILFMVSPGDG. Residues Asn-83 and Asn-134 are each glycosylated (N-linked (GlcNAc...) asparagine). The active site involves Ser-206. 2 N-linked (GlcNAc...) asparagine glycosylation sites follow: Asn-309 and Asn-350. Catalysis depends on residues Asp-390 and His-450.

It belongs to the peptidase S10 family.

Its function is as follows. May be involved in the digestion of phagocytosed particles in the lysosome, participation in an inflammatory protease cascade, and trimming of peptides for antigen presentation. The sequence is that of Probable serine carboxypeptidase CPVL (Cpvl) from Mus musculus (Mouse).